The sequence spans 216 residues: Acyl-homoserine-lactone synthase (216 aa).

The protein belongs to the autoinducer synthase family.

It carries out the reaction a fatty acyl-[ACP] + S-adenosyl-L-methionine = an N-acyl-L-homoserine lactone + S-methyl-5'-thioadenosine + holo-[ACP] + H(+). Functionally, required for the synthesis of OHHL (N-(3-oxohexanoyl)-L-homoserine lactone), an autoinducer molecule which binds to CarR and thus acts in the control of the biosynthesis of carbapenem antibiotics. This chain is Acyl-homoserine-lactone synthase (carI), found in Pectobacterium carotovorum subsp. carotovorum (Erwinia carotovora subsp. carotovora).